Consider the following 323-residue polypeptide: Acetylglutamate kinase (323 aa).

Substrate is bound by residues 90 to 91 (GG), R112, and N218.

This sequence belongs to the acetylglutamate kinase family. ArgB subfamily.

The protein resides in the cytoplasm. The enzyme catalyses N-acetyl-L-glutamate + ATP = N-acetyl-L-glutamyl 5-phosphate + ADP. The protein operates within amino-acid biosynthesis; L-arginine biosynthesis; N(2)-acetyl-L-ornithine from L-glutamate: step 2/4. Its function is as follows. Catalyzes the ATP-dependent phosphorylation of N-acetyl-L-glutamate. The sequence is that of Acetylglutamate kinase from Ehrlichia canis (strain Jake).